A 390-amino-acid polypeptide reads, in one-letter code: Neuromedin-B receptor (390 aa).

Positions 1–20 are disordered; sequence MPPRSLPNLSLPTEASESEL. At 1–41 the chain is on the extracellular side; that stretch reads MPPRSLPNLSLPTEASESELEPEVWENDFLPDSDGTTAELV. Asn8 carries an N-linked (GlcNAc...) asparagine glycan. A helical transmembrane segment spans residues 42-65; sequence IRCVIPSLYLIIISVGLLGNIMLV. Topologically, residues 66–79 are cytoplasmic; sequence KIFLTNSTMRSVPN. The helical transmembrane segment at 80–99 threads the bilayer; sequence IFISNLAAGDLLLLLTCVPV. Topologically, residues 100–117 are extracellular; sequence DASRYFFDEWVFGKLGCK. Cys116 and Cys198 are oxidised to a cystine. Residues 118–139 traverse the membrane as a helical segment; the sequence is LIPAIQLTSVGVSVFTLTALSA. At 140–156 the chain is on the cytoplasmic side; sequence DRYRAIVNPMDMQTSGV. The helical transmembrane segment at 157-177 threads the bilayer; that stretch reads VLWTSLKAVGIWVVSVLLAVP. Over 178–211 the chain is Extracellular; the sequence is EAVFSEVARIGSSDNSSFTACIPYPQTDELHPKI. Asn192 carries N-linked (GlcNAc...) asparagine glycosylation. The chain crosses the membrane as a helical span at residues 212–235; that stretch reads HSVLIFLVYFLIPLVIISIYYYHI. At 236 to 266 the chain is on the cytoplasmic side; that stretch reads AKTLIRSAHNLPGEYNEHTKKQMETRKRLAK. The helical transmembrane segment at 267 to 287 threads the bilayer; sequence IVLVFVGCFVFCWFPNHILYL. The Extracellular segment spans residues 288-299; that stretch reads YRSFNYKEIDPS. The chain crosses the membrane as a helical span at residues 300 to 327; sequence LGHMIVTLVARVLSFSNSCVNPFALYLL. At 328 to 390 the chain is on the cytoplasmic side; that stretch reads SESFRKHFNS…GHSTKQEIAL (63 aa). Cys341 carries S-palmitoyl cysteine lipidation. Ser352 carries the post-translational modification Phosphoserine.

The protein belongs to the G-protein coupled receptor 1 family. In terms of tissue distribution, brain (olfactory bulb and central thalamic regions), and esophagus.

It is found in the cell membrane. Functionally, receptor for neuromedin-B. Contributes to the maintenance of basal sigh rate through signaling in the pre-Botzinger complex, a cluster of several thousand neurons in the ventrolateral medulla responsible for inspiration during respiratory activity. Contributes to the induction of sneezing following exposure to chemical irritants or allergens which causes release of NMB by nasal sensory neurons and activation of NMBR-expressing neurons in the sneeze-evoking region of the brainstem. These in turn activate neurons of the caudal ventral respiratory group, giving rise to the sneezing response. Contributes to induction of acute itch, possibly through its activation on dorsal root ganglion neurons by the NMB peptide. Plays a role in the innate immune response to influenza A virus infection by enhancing interferon alpha expression and reducing expression of IL6. Plays a role in CSF1-induced proliferation of osteoclast precursors by contributing to the positive regulation of the expression of the CSF1 receptor CSF1R. In Rattus norvegicus (Rat), this protein is Neuromedin-B receptor (Nmbr).